A 473-amino-acid chain; its full sequence is Serine palmitoyltransferase 1 (473 aa).

Over Met-1–Gln-15 the chain is Lumenal. An interaction with SPTLC2 region spans residues Met-1–Pro-66. A helical transmembrane segment spans residues Ala-16–Ile-36. The Cytoplasmic segment spans residues Arg-37–Leu-473. Residue Tyr-164 is modified to Phosphotyrosine; by ABL.

It belongs to the class-II pyridoxal-phosphate-dependent aminotransferase family. As to quaternary structure, component of the serine palmitoyltransferase (SPT) complex, which is also composed of SPTLC2 or SPTLC3 and SPTSSA or SPTSSB. The heterodimer with SPTLC2 or SPTLC3 forms the catalytic core of the enzyme, while SPTSSA or SPTSSB subunits determine substrate specificity. SPT also interacts with ORMDL proteins, especially ORMDL3, which negatively regulate SPT activity in the presence of ceramides. Forms dimers of heterodimers with SPTLC2. Interacts with RTN4. Requires pyridoxal 5'-phosphate as cofactor. Phosphorylation at Tyr-164 inhibits activity and promotes cell survival.

The protein localises to the endoplasmic reticulum membrane. The enzyme catalyses L-serine + hexadecanoyl-CoA + H(+) = 3-oxosphinganine + CO2 + CoA. It carries out the reaction octadecanoyl-CoA + L-serine + H(+) = 3-oxoeicosasphinganine + CO2 + CoA. It catalyses the reaction tetradecanoyl-CoA + L-serine + H(+) = 3-oxohexadecasphinganine + CO2 + CoA. The catalysed reaction is dodecanoyl-CoA + L-serine + H(+) = 3-oxotetradecasphinganine + CO2 + CoA. It participates in lipid metabolism; sphingolipid metabolism. Its activity is regulated as follows. SPT complex catalytic activity is negatively regulated by ORMDL proteins, including ORMDL3, in the presence of ceramides. This mechanism allows to maintain ceramide levels at sufficient concentrations for the production of complex sphingolipids, but which prevents the accumulation of ceramides to levels that trigger apoptosis. Component of the serine palmitoyltransferase multisubunit enzyme (SPT) that catalyzes the initial and rate-limiting step in sphingolipid biosynthesis by condensing L-serine and activated acyl-CoA (most commonly palmitoyl-CoA) to form long-chain bases. The SPT complex is also composed of SPTLC2 or SPTLC3 and SPTSSA or SPTSSB. Within this complex, the heterodimer with SPTLC2 or SPTLC3 forms the catalytic core. The composition of the serine palmitoyltransferase (SPT) complex determines the substrate preference. The SPTLC1-SPTLC2-SPTSSA complex shows a strong preference for C16-CoA substrate, while the SPTLC1-SPTLC3-SPTSSA isozyme uses both C14-CoA and C16-CoA as substrates, with a slight preference for C14-CoA. The SPTLC1-SPTLC2-SPTSSB complex shows a strong preference for C18-CoA substrate, while the SPTLC1-SPTLC3-SPTSSB isozyme displays an ability to use a broader range of acyl-CoAs, without apparent preference. Required for adipocyte cell viability and metabolic homeostasis. In Bos taurus (Bovine), this protein is Serine palmitoyltransferase 1 (SPTLC1).